The following is a 202-amino-acid chain: Ribosome maturation factor RimP (202 aa).

It belongs to the RimP family.

The protein resides in the cytoplasm. Its function is as follows. Required for maturation of 30S ribosomal subunits. The polypeptide is Ribosome maturation factor RimP (Polaromonas naphthalenivorans (strain CJ2)).